A 773-amino-acid chain; its full sequence is Carnitine O-palmitoyltransferase 1, liver isoform (773 aa).

At Ala2 the chain carries N-acetylalanine. The Cytoplasmic portion of the chain corresponds to 2–47; it reads AEAHQAVAFQFTVTPDGIDLRLSHEALKQICLSGLHSWKKKFIRFK. The helical transmembrane segment at 48-73 threads the bilayer; it reads NGIITGVFPANPSSWLIVVVGVISSM. The Mitochondrial intermembrane portion of the chain corresponds to 74-102; it reads HAKVDPSLGMIAKISRTLDTTGRMSSQTK. A helical transmembrane segment spans residues 103-122; the sequence is NIVSGVLFGTGLWVAVIMTM. Residues 123–773 are Cytoplasmic-facing; the sequence is RYSLKVLLSY…LFGLTINSKK (651 aa). At Tyr282 the chain carries 3'-nitrotyrosine. His473 (proton acceptor) is an active-site residue. 555 to 567 is a binding site for CoA; that stretch reads GKGLIKKCRTSPD. Thr588 carries the phosphothreonine modification. Tyr589 carries the 3'-nitrotyrosine modification. (R)-carnitine is bound by residues Tyr589 and Thr602. Thr604 bears the Phosphothreonine mark. Residues Ser741 and Ser747 each carry the phosphoserine modification.

Belongs to the carnitine/choline acetyltransferase family. Homohexamer and homotrimer. Identified in a complex that contains at least CPT1A, ACSL1 and VDAC1. Also identified in complexes with ACSL1 and VDAC2 and VDAC3. Interacts with ZDHHC4. In terms of tissue distribution, liver and kidney.

Its subcellular location is the mitochondrion outer membrane. It carries out the reaction (R)-carnitine + hexadecanoyl-CoA = O-hexadecanoyl-(R)-carnitine + CoA. The enzyme catalyses succinyl-CoA + L-lysyl-[protein] = N(6)-succinyl-L-lysyl-[protein] + CoA + H(+). Its pathway is lipid metabolism; fatty acid beta-oxidation. With respect to regulation, inhibited by malonyl-CoA. Functionally, catalyzes the transfer of the acyl group of long-chain fatty acid-CoA conjugates onto carnitine, an essential step for the mitochondrial uptake of long-chain fatty acids and their subsequent beta-oxidation in the mitochondrion. Also possesses a lysine succinyltransferase activity that can regulate enzymatic activity of substrate proteins such as ENO1 and metabolism independent of its classical carnitine O-palmitoyltransferase activity. Plays an important role in hepatic triglyceride metabolism. Also plays a role in inducible regulatory T-cell (iTreg) differentiation once activated by butyryl-CoA that antagonizes malonyl-CoA-mediated CPT1A repression. Sustains the IFN-I response by recruiting ZDHCC4 to palmitoylate MAVS at the mitochondria leading to MAVS stabilization and activation. The chain is Carnitine O-palmitoyltransferase 1, liver isoform (Cpt1a) from Rattus norvegicus (Rat).